Here is a 549-residue protein sequence, read N- to C-terminus: YTH domain-containing family protein 1 (549 aa).

5 disordered regions span residues 29-102, 139-165, 243-262, 273-298, and 425-458; these read QAPW…QPNM, GHPPHQAPVDSQSNVVRGPPRKPRQSG, GASGITAPTGPSATTPQQAV, DSTETQSDNADTDTPTAVGTPDAKGP, and REDSSEGVTQEEPAPAVAEQDDTTGGLDGNSENK. Polar residues predominate over residues 49–61; it reads VVGQTQSSPQYNG. Over residues 71-102 the composition is skewed to low complexity; sequence QGYYMPQQQQQQQQMPQYYGGPMSPSQPQPNM. Composition is skewed to polar residues over residues 251–260 and 273–289; these read TGPSATTPQQ and DSTETQSDNADTDTPTA. Residues 307-513 form the YTH domain; the sequence is DRFFVLKSLT…SVGRRLIGLF (207 aa).

The protein belongs to the YTHDF family. YTHDF1 subfamily.

Its function is as follows. Specifically recognizes and binds N6-methyladenosine (m6A)-containing mRNAs, and regulates their stability. M6A is a modification present at internal sites of mRNAs and some non-coding RNAs and plays a role in mRNA stability and processing. Directly interacts with the acid phosphatase APHA mRNA to increase its stability. This Cryphonectria parasitica (strain ATCC 38755 / EP155) protein is YTH domain-containing family protein 1.